A 267-amino-acid polypeptide reads, in one-letter code: MSTKSYAERAKAHNSPVARKLLALMHEKKTNLCASLDVRTSRKLLELADTLGPHICLLKTHVDILTDFDIETTVKPLQQLAAKHNFMIFEDRKFADIGNTVKLQYSSGVYRIAEWADITNAHGVTGPGVIAGLKEAAKLASQEPRGLLMLAELSSQGSLARGDYTAGVVEMAKLDKDFVIGFIAQRDMGGRADGFDWLIMTPGVGLDDKGDGLGQQYRTVDEVVSDGTDVIIVGRGLFDKGRDPNVEGARYRKAGWEAYLRRIGETS.

Residues aspartate 37, 59 to 61 (KTH), 91 to 100 (DRKFADIGNT), tyrosine 217, and arginine 235 contribute to the substrate site. Residue lysine 93 is the Proton donor of the active site.

This sequence belongs to the OMP decarboxylase family.

The catalysed reaction is orotidine 5'-phosphate + H(+) = UMP + CO2. It participates in pyrimidine metabolism; UMP biosynthesis via de novo pathway; UMP from orotate: step 2/2. The sequence is that of Orotidine 5'-phosphate decarboxylase (URA3) from Eremothecium gossypii (strain ATCC 10895 / CBS 109.51 / FGSC 9923 / NRRL Y-1056) (Yeast).